We begin with the raw amino-acid sequence, 432 residues long: Adenylosuccinate synthetase (432 aa).

GTP is bound by residues 13 to 19 (GDEGKGK) and 41 to 43 (GHT). Residue Asp-14 is the Proton acceptor of the active site. Positions 14 and 41 each coordinate Mg(2+). IMP is bound by residues 14 to 17 (DEGK), 39 to 42 (NAGH), Thr-130, Arg-144, Gln-225, Thr-240, and Arg-304. His-42 functions as the Proton donor in the catalytic mechanism. Residue 300–306 (ATTGRKR) coordinates substrate. GTP contacts are provided by residues Arg-306, 332 to 334 (KLD), and 415 to 417 (STG).

The protein belongs to the adenylosuccinate synthetase family. As to quaternary structure, homodimer. The cofactor is Mg(2+).

It is found in the cytoplasm. It carries out the reaction IMP + L-aspartate + GTP = N(6)-(1,2-dicarboxyethyl)-AMP + GDP + phosphate + 2 H(+). It functions in the pathway purine metabolism; AMP biosynthesis via de novo pathway; AMP from IMP: step 1/2. In terms of biological role, plays an important role in the de novo pathway of purine nucleotide biosynthesis. Catalyzes the first committed step in the biosynthesis of AMP from IMP. This Vibrio cholerae serotype O1 (strain ATCC 39541 / Classical Ogawa 395 / O395) protein is Adenylosuccinate synthetase.